The chain runs to 352 residues: Carbohydrate sulfotransferase 11 (352 aa).

Over 1-16 the chain is Cytoplasmic; it reads MKPALLEVMRMNRICR. The chain crosses the membrane as a helical; Signal-anchor for type II membrane protein span at residues 17–37; sequence MVLATCFGSFILVIFYFQSML. At 38–352 the chain is on the lumenal side; it reads HPVMRRNPFG…YSVPNYLKLD (315 aa). Residues 124-130 and 186-194 each bind 3'-phosphoadenylyl sulfate; these read PKVACTN and REPFERLVS. 4 N-linked (GlcNAc...) asparagine glycosylation sites follow: N205, N223, N321, and N342.

The protein belongs to the sulfotransferase 2 family. In terms of processing, N-glycosylated; required for activity and stability. In terms of tissue distribution, predominantly expressed in brain and kidney. Also expressed at weaker level in heart, spleen and lung. Expressed in developing chondrocytes.

It is found in the golgi apparatus membrane. The enzyme catalyses chondroitin beta-D-glucuronate + n 3'-phosphoadenylyl sulfate = chondroitin 4'-sulfate + n adenosine 3',5'-bisphosphate + n H(+). Catalyzes the transfer of sulfate to position 4 of the N-acetylgalactosamine (GalNAc) residue of chondroitin. Chondroitin sulfate constitutes the predominant proteoglycan present in cartilage and is distributed on the surfaces of many cells and extracellular matrices. Can also sulfate Gal residues in desulfated dermatan sulfate. Preferentially sulfates in GlcA-&gt;GalNAc unit than in IdoA-&gt;GalNAc unit. Does not form 4, 6-di-O-sulfated GalNAc when chondroitin sulfate C is used as an acceptor. This is Carbohydrate sulfotransferase 11 (Chst11) from Mus musculus (Mouse).